We begin with the raw amino-acid sequence, 139 residues long: Putative pre-16S rRNA nuclease (139 aa).

It belongs to the YqgF nuclease family.

It localises to the cytoplasm. In terms of biological role, could be a nuclease involved in processing of the 5'-end of pre-16S rRNA. The protein is Putative pre-16S rRNA nuclease of Legionella pneumophila subsp. pneumophila (strain Philadelphia 1 / ATCC 33152 / DSM 7513).